Here is a 99-residue protein sequence, read N- to C-terminus: Cell cycle protein GpsB (99 aa).

A coiled-coil region spans residues 34-71 (LDMIIKDYETFHQEIEELQQENLQLKKQLEEASKKQPV).

This sequence belongs to the GpsB family. As to quaternary structure, forms polymers through the coiled coil domains. Interacts with PBP1, MreC and EzrA.

It is found in the cytoplasm. In terms of biological role, divisome component that associates with the complex late in its assembly, after the Z-ring is formed, and is dependent on DivIC and PBP2B for its recruitment to the divisome. Together with EzrA, is a key component of the system that regulates PBP1 localization during cell cycle progression. Its main role could be the removal of PBP1 from the cell pole after pole maturation is completed. Also contributes to the recruitment of PBP1 to the division complex. Not essential for septum formation. The polypeptide is Cell cycle protein GpsB (Bacillus velezensis (strain DSM 23117 / BGSC 10A6 / LMG 26770 / FZB42) (Bacillus amyloliquefaciens subsp. plantarum)).